Consider the following 482-residue polypeptide: Kynurenine 3-monooxygenase (482 aa).

Belongs to the aromatic-ring hydroxylase family. KMO subfamily. It depends on FAD as a cofactor.

The protein resides in the mitochondrion outer membrane. The enzyme catalyses L-kynurenine + NADPH + O2 + H(+) = 3-hydroxy-L-kynurenine + NADP(+) + H2O. Its pathway is cofactor biosynthesis; NAD(+) biosynthesis; quinolinate from L-kynurenine: step 1/3. In terms of biological role, catalyzes the hydroxylation of L-kynurenine (L-Kyn) to form 3-hydroxy-L-kynurenine (L-3OHKyn). Required for synthesis of quinolinic acid. The protein is Kynurenine 3-monooxygenase of Phaeosphaeria nodorum (strain SN15 / ATCC MYA-4574 / FGSC 10173) (Glume blotch fungus).